A 440-amino-acid polypeptide reads, in one-letter code: Lysine histidine transporter-like 6 (440 aa).

A compositionally biased stretch (polar residues) spans Met-1–Ser-10. The segment at Met-1–Asp-25 is disordered. Residues Met-1–Lys-31 lie on the Cytoplasmic side of the membrane. Over residues Lys-11–Asp-25 the composition is skewed to basic and acidic residues. A helical membrane pass occupies residues Trp-32 to Leu-51. At Pro-52–Gly-61 the chain is on the extracellular side. The chain crosses the membrane as a helical span at residues Pro-62–Val-82. The Cytoplasmic portion of the chain corresponds to Gln-83–Gly-109. Residues Pro-110 to Val-130 traverse the membrane as a helical segment. Over Thr-131 to Gln-152 the chain is Extracellular. A helical membrane pass occupies residues Ser-153–Asn-173. Ser-174 is a topological domain (cytoplasmic). A helical membrane pass occupies residues Val-175–Gly-195. Over Gly-196–Arg-221 the chain is Extracellular. The helical transmembrane segment at Val-222–Ile-242 threads the bilayer. The Cytoplasmic segment spans residues Gln-243–Gly-261. The helical transmembrane segment at Val-262 to Trp-282 threads the bilayer. Residues Ala-283 to Ala-300 lie on the Extracellular side of the membrane. A helical membrane pass occupies residues Trp-301–Phe-321. At Ala-322–Tyr-353 the chain is on the cytoplasmic side. Helical transmembrane passes span Val-354–Phe-374 and Gly-375–Lys-395. The Cytoplasmic portion of the chain corresponds to Lys-396 to Arg-399. A helical transmembrane segment spans residues Phe-400–Ala-420. At Ser-421–Ala-440 the chain is on the extracellular side.

The protein belongs to the amino acid/polyamine transporter 2 family. Amino acid/auxin permease (AAAP) (TC 2.A.18.2) subfamily.

Its subcellular location is the cell membrane. Its function is as follows. Amino acid transporter. The polypeptide is Lysine histidine transporter-like 6 (Arabidopsis thaliana (Mouse-ear cress)).